A 1545-amino-acid chain; its full sequence is Dual oxidase 2 (1545 aa).

An N-terminal signal peptide occupies residues 1–25 (MLCIRPEALVLLGALLTVPLDPVGG). The Extracellular segment spans residues 26–601 (QDALSLTWEV…EGSGPGFGIT (576 aa)). A peroxidase-like; mediates peroxidase activity region spans residues 30-596 (SLTWEVQRYD…VIQYFEGSGP (567 aa)). N-linked (GlcNAc...) asparagine glycans are attached at residues Asn-100, Asn-312, Asn-348, Asn-358, Asn-455, and Asn-549. A disulfide bridge links Cys-124 with Cys-1159. Residues 602 to 622 (IVALCCLPLMSLLISGVVAYF) traverse the membrane as a helical segment. Residues 623–1037 (RSRERKKLQK…YKRFVENYRR (415 aa)) are Cytoplasmic-facing. EF-hand domains lie at 819–854 (PQDM…FMKG), 855–890 (SPED…FIEI), and 899–934 (QLTE…HDSE). Ca(2+) contacts are provided by Asp-832, Asp-834, Asn-836, Tyr-838, Glu-843, Asp-868, Asp-870, Asn-872, and Glu-879. Residues 960-1242 (RVSFIIRTPE…GSFALIQLPR (283 aa)) are interaction with TXNDC11. A helical membrane pass occupies residues 1038–1058 (HIVCVAIFSAICAGLFVERAY). At 1059–1074 (YYAFVSPPSGIAETTF) the chain is on the extracellular side. The helical transmembrane segment at 1075–1097 (VGIILSRGTAASVSFMFSYILLT) threads the bilayer. Residues 1081-1263 (RGTAASVSFM…YVGDKLVSLS (183 aa)) enclose the Ferric oxidoreductase domain. Over 1098 to 1125 (MCRNLITFLRETFLNHYVPFDAAVDFHR) the chain is Cytoplasmic. Residues 1126–1148 (WIAMAALVLAILHSVGHVVNVYI) traverse the membrane as a helical segment. At 1149-1182 (FSVSPLSLLACVFPSVFVNDGSKLPQKFYWWFFQ) the chain is on the extracellular side. Residues 1183 to 1203 (TIPGMTGVLLLVVLAIMYVFA) traverse the membrane as a helical segment. Topologically, residues 1204–1220 (SPYFRRRSFRGFWLTHH) are cytoplasmic. A helical transmembrane segment spans residues 1221-1241 (FYILLYVLLIIHGSFALIQLP). A topological domain (extracellular) is located at residue Arg-1242. Residues 1243–1263 (FHIFFLVPALIYVGDKLVSLS) traverse the membrane as a helical segment. One can recognise an FAD-binding FR-type domain in the interval 1264 to 1370 (RKKVEISVVK…DGPFGEGHQE (107 aa)). The Cytoplasmic segment spans residues 1264–1545 (RKKVEISVVK…THFVHHYENF (282 aa)).

In the N-terminal section; belongs to the peroxidase family. Heterodimer with DUOXA2; disulfide-linked. Interacts with TXNDC11, TPO and CYBA. Post-translationally, N-glycosylated. In terms of tissue distribution, expressed in thyroid, and the digestive tract especially in stomach, cecum and sigmoidal colon (at protein level). Expressed in thyroid.

The protein localises to the apical cell membrane. It is found in the cell junction. The catalysed reaction is NADH + O2 + H(+) = H2O2 + NAD(+). It catalyses the reaction NADPH + O2 + H(+) = H2O2 + NADP(+). The protein operates within hormone biosynthesis; thyroid hormone biosynthesis. Its activity is regulated as follows. The NADPH oxidase activity is calcium-dependent. Peroxidase activity is inhibited by aminobenzohydrazide. Its function is as follows. Generates hydrogen peroxide which is required for the activity of thyroid peroxidase/TPO and lactoperoxidase/LPO. Plays a role in thyroid hormones synthesis and lactoperoxidase-mediated antimicrobial defense at the surface of mucosa. May have its own peroxidase activity through its N-terminal peroxidase-like domain. The chain is Dual oxidase 2 (DUOX2) from Sus scrofa (Pig).